The chain runs to 630 residues: 1-deoxy-D-xylulose-5-phosphate synthase (630 aa).

Thiamine diphosphate contacts are provided by residues H75 and 116–118 (GHS). Position 147 (D147) interacts with Mg(2+). Thiamine diphosphate contacts are provided by residues 148–149 (GA), N176, Y287, and E367. N176 is a binding site for Mg(2+).

The protein belongs to the transketolase family. DXPS subfamily. Homodimer. It depends on Mg(2+) as a cofactor. The cofactor is thiamine diphosphate.

The catalysed reaction is D-glyceraldehyde 3-phosphate + pyruvate + H(+) = 1-deoxy-D-xylulose 5-phosphate + CO2. The protein operates within metabolic intermediate biosynthesis; 1-deoxy-D-xylulose 5-phosphate biosynthesis; 1-deoxy-D-xylulose 5-phosphate from D-glyceraldehyde 3-phosphate and pyruvate: step 1/1. Catalyzes the acyloin condensation reaction between C atoms 2 and 3 of pyruvate and glyceraldehyde 3-phosphate to yield 1-deoxy-D-xylulose-5-phosphate (DXP). The sequence is that of 1-deoxy-D-xylulose-5-phosphate synthase from Treponema pallidum (strain Nichols).